The primary structure comprises 599 residues: Elongation factor 4 (599 aa).

A tr-type G domain is found at 2-184 (KNIRNFSIIA…RLVRDIPPPE (183 aa)). Residues 14–19 (DHGKST) and 131–134 (NKID) contribute to the GTP site.

The protein belongs to the TRAFAC class translation factor GTPase superfamily. Classic translation factor GTPase family. LepA subfamily.

It is found in the cell inner membrane. The catalysed reaction is GTP + H2O = GDP + phosphate + H(+). Its function is as follows. Required for accurate and efficient protein synthesis under certain stress conditions. May act as a fidelity factor of the translation reaction, by catalyzing a one-codon backward translocation of tRNAs on improperly translocated ribosomes. Back-translocation proceeds from a post-translocation (POST) complex to a pre-translocation (PRE) complex, thus giving elongation factor G a second chance to translocate the tRNAs correctly. Binds to ribosomes in a GTP-dependent manner. In Sodalis glossinidius (strain morsitans), this protein is Elongation factor 4.